Reading from the N-terminus, the 161-residue chain is Stress response protein YvgO (161 aa).

An N-terminal signal peptide occupies residues 1 to 26; that stretch reads MKRIRIPMTLALGAALTIAPLSFASA.

The polypeptide is Stress response protein YvgO (yvgO) (Bacillus subtilis (strain 168)).